The chain runs to 198 residues: Superoxide dismutase [Mn], mitochondrial (198 aa).

His26 is a binding site for Mn(2+). The residue at position 34 (Tyr34) is a 3'-nitrotyrosine. N6-acetyllysine; alternate is present on residues Lys44 and Lys51. An N6-succinyllysine; alternate mark is found at Lys44 and Lys51. Residue His74 coordinates Mn(2+). At Lys90 the chain carries N6-acetyllysine. N6-acetyllysine; alternate occurs at positions 98 and 106. Lys98 and Lys106 each carry N6-succinyllysine; alternate. 2 residues coordinate Mn(2+): Asp159 and His163. Lys178 carries the N6-acetyllysine modification.

Belongs to the iron/manganese superoxide dismutase family. As to quaternary structure, homotetramer. The cofactor is Mn(2+). In terms of processing, nitrated under oxidative stress. Nitration coupled with oxidation inhibits the catalytic activity. Acetylation at Lys-98 decreases enzymatic activity. Deacetylated by SIRT3 upon exposure to ionizing radiations or after long fasting. Post-translationally, polyubiquitinated; leading to proteasomal degradation. Deubiquitinated by USP36 which increases protein stability.

It localises to the mitochondrion matrix. It carries out the reaction 2 superoxide + 2 H(+) = H2O2 + O2. Functionally, destroys superoxide anion radicals which are normally produced within the cells and which are toxic to biological systems. This Hylobates lar (Lar gibbon) protein is Superoxide dismutase [Mn], mitochondrial (SOD2).